A 474-amino-acid chain; its full sequence is Dol-P-Glc:Glc(2)Man(9)GlcNAc(2)-PP-Dol alpha-1,2-glucosyltransferase (474 aa).

Residues 1-6 lie on the Cytoplasmic side of the membrane; the sequence is MAQLEG. Residues 7-27 form a helical membrane-spanning segment; that stretch reads YYFSAALSCTFLVSCLLFSAF. Residues 28 to 64 are Extracellular-facing; the sequence is SRALREPYMDEIFHLPQAQRYCEGRFSLSQWDPMITT. The chain crosses the membrane as a helical span at residues 65–85; it reads LPGLYLVSVGVVKPASWLLGW. The Cytoplasmic portion of the chain corresponds to 86-97; it reads SEHVICSIGVLR. A helical membrane pass occupies residues 98–118; the sequence is FVNLLFSVGNFYLLYLLFRKV. Residues 119 to 126 are Extracellular-facing; sequence QPRNKASS. A helical membrane pass occupies residues 127 to 147; it reads SIQRILSTLTLAVFPTLYFFN. The Cytoplasmic segment spans residues 148 to 150; it reads FLY. Residues 151 to 171 form a helical membrane-spanning segment; that stretch reads YTEAGSVFFTLFAYLMCLYGN. Topologically, residues 172–175 are extracellular; that stretch reads HRTS. A helical transmembrane segment spans residues 176–196; the sequence is ALLGFCGFMFRQTNIIWAAFC. Residues 197 to 256 are Cytoplasmic-facing; the sequence is AGHLIAQKCSEAWKIELQKKKEERLAPTKGPLSELRRVLQFLLVYAMSLKNLRMLFLLTW. A helical transmembrane segment spans residues 257–277; it reads PYVLLLLAFFAFVVVNGGIVV. Topologically, residues 278–283 are extracellular; that stretch reads GDRSSH. The chain crosses the membrane as a helical span at residues 284 to 304; the sequence is EACLHFPQLFYFFSFTAFFSF. Residues 305 to 317 are Cytoplasmic-facing; that stretch reads PHLLSLTKVKTFL. The helical transmembrane segment at 318–338 threads the bilayer; sequence SLVWKRRVQFSVVTLVSILLV. Topologically, residues 339 to 365 are extracellular; that stretch reads WKFTYVHKYLLADNRHYTFYVWKRVFQ. The helical transmembrane segment at 366–386 threads the bilayer; sequence RHEVVKYLLVPAYIFAGWAIA. The Cytoplasmic segment spans residues 387–392; that stretch reads DSLKAK. A helical transmembrane segment spans residues 393 to 413; the sequence is SIFWNLMFFVCLVASTVPQKL. The Extracellular portion of the chain corresponds to 414 to 436; sequence LEFRYFILPYIIYRLNIPLPPIS. A helical transmembrane segment spans residues 437-457; the sequence is RLVCELGCYTVVNFVTFYIFL. Residues 458–473 lie on the Cytoplasmic side of the membrane; sequence NKTFQWPNSQDIQRFM.

It belongs to the ALG10 glucosyltransferase family. As to quaternary structure, interacts with KCNH1; may regulate KCNH1, possibly by regulating its N-glycosylation. Interacts with KCNH2; may reduce KCNH2 sensitivity to classic proarrhythmic drug blockade, possibly by regulating its N-glycosylation.

Its subcellular location is the endoplasmic reticulum membrane. The enzyme catalyses an alpha-D-Glc-(1-&gt;3)-alpha-D-Glc-(1-&gt;3)-alpha-D-Man-(1-&gt;2)-alpha-D-Man-(1-&gt;2)-alpha-D-Man-(1-&gt;3)-[alpha-D-Man-(1-&gt;2)-alpha-D-Man-(1-&gt;3)-[alpha-D-Man-(1-&gt;2)-alpha-D-Man-(1-&gt;6)]-alpha-D-Man-(1-&gt;6)]-beta-D-Man-(1-&gt;4)-beta-D-GlcNAc-(1-&gt;4)-alpha-D-GlcNAc-diphospho-di-trans,poly-cis-dolichol + a di-trans,poly-cis-dolichyl beta-D-glucosyl phosphate = a alpha-D-Glc-(1-&gt;2)-alpha-D-Glc-(1-&gt;3)-alpha-D-Glc-(1-&gt;3)-alpha-D-Man-(1-&gt;2)-alpha-D-Man-(1-&gt;2)-alpha-D-Man-(1-&gt;3)-[alpha-D-Man-(1-&gt;2)-alpha-D-Man-(1-&gt;3)-[alpha-D-Man-(1-&gt;2)-alpha-D-Man-(1-&gt;6)]-alpha-D-Man-(1-&gt;6)]-beta-D-Man-(1-&gt;4)-beta-D-GlcNAc-(1-&gt;4)-alpha-D-GlcNAc-diphospho-di-trans,poly-cis-dolichol + a di-trans,poly-cis-dolichyl phosphate + H(+). It functions in the pathway protein modification; protein glycosylation. Its function is as follows. Dol-P-Glc:Glc(2)Man(9)GlcNAc(2)-PP-Dol alpha-1,2-glucosyltransferase that operates in the biosynthetic pathway of dolichol-linked oligosaccharides, the glycan precursors employed in protein asparagine (N)-glycosylation. The assembly of dolichol-linked oligosaccharides begins on the cytosolic side of the endoplasmic reticulum membrane and finishes in its lumen. The sequential addition of sugars to dolichol pyrophosphate produces dolichol-linked oligosaccharides containing fourteen sugars, including two GlcNAcs, nine mannoses and three glucoses. Once assembled, the oligosaccharide is transferred from the lipid to nascent proteins by oligosaccharyltransferases. In the lumen of the endoplasmic reticulum, adds the third and last glucose residue from dolichyl phosphate glucose (Dol-P-Glc) onto the lipid-linked oligosaccharide intermediate Glc(2)Man(9)GlcNAc(2)-PP-Dol to produce Glc(3)Man(9)GlcNAc(2)-PP-Dol. The sequence is that of Dol-P-Glc:Glc(2)Man(9)GlcNAc(2)-PP-Dol alpha-1,2-glucosyltransferase from Mus musculus (Mouse).